A 453-amino-acid chain; its full sequence is Bifunctional protein GlmU (453 aa).

Positions 1–226 (MKFSAVILAA…AIEVEGVNDR (226 aa)) are pyrophosphorylase. UDP-N-acetyl-alpha-D-glucosamine contacts are provided by residues 8–11 (LAAG), Lys22, Gln73, 78–79 (GT), 100–102 (YGD), Gly137, Glu151, Asn166, and Asn224. Residue Asp102 participates in Mg(2+) binding. A Mg(2+)-binding site is contributed by Asn224. Residues 227–247 (AQLARLERAFQSMQAQKLLEQ) form a linker region. The interval 248-453 (GVMLRDPARF…TGWQRPVKQK (206 aa)) is N-acetyltransferase. Positions 330 and 348 each coordinate UDP-N-acetyl-alpha-D-glucosamine. His360 acts as the Proton acceptor in catalysis. Residues Tyr363 and Asn374 each contribute to the UDP-N-acetyl-alpha-D-glucosamine site. Residues Ala377, 383–384 (NY), Ser402, Ala420, and Arg437 contribute to the acetyl-CoA site.

The protein in the N-terminal section; belongs to the N-acetylglucosamine-1-phosphate uridyltransferase family. It in the C-terminal section; belongs to the transferase hexapeptide repeat family. In terms of assembly, homotrimer. Mg(2+) serves as cofactor.

The protein localises to the cytoplasm. It catalyses the reaction alpha-D-glucosamine 1-phosphate + acetyl-CoA = N-acetyl-alpha-D-glucosamine 1-phosphate + CoA + H(+). The enzyme catalyses N-acetyl-alpha-D-glucosamine 1-phosphate + UTP + H(+) = UDP-N-acetyl-alpha-D-glucosamine + diphosphate. Its pathway is nucleotide-sugar biosynthesis; UDP-N-acetyl-alpha-D-glucosamine biosynthesis; N-acetyl-alpha-D-glucosamine 1-phosphate from alpha-D-glucosamine 6-phosphate (route II): step 2/2. It participates in nucleotide-sugar biosynthesis; UDP-N-acetyl-alpha-D-glucosamine biosynthesis; UDP-N-acetyl-alpha-D-glucosamine from N-acetyl-alpha-D-glucosamine 1-phosphate: step 1/1. The protein operates within bacterial outer membrane biogenesis; LPS lipid A biosynthesis. Its function is as follows. Catalyzes the last two sequential reactions in the de novo biosynthetic pathway for UDP-N-acetylglucosamine (UDP-GlcNAc). The C-terminal domain catalyzes the transfer of acetyl group from acetyl coenzyme A to glucosamine-1-phosphate (GlcN-1-P) to produce N-acetylglucosamine-1-phosphate (GlcNAc-1-P), which is converted into UDP-GlcNAc by the transfer of uridine 5-monophosphate (from uridine 5-triphosphate), a reaction catalyzed by the N-terminal domain. The polypeptide is Bifunctional protein GlmU (Vibrio campbellii (strain ATCC BAA-1116)).